Here is a 482-residue protein sequence, read N- to C-terminus: MTAKTLYDKLWDLHEVTRRDDGSSLIYIDRHILHEVTSPQAFEGLRLAGRKPWRIDANIATPDHNVPTTRAERQGGLESISDEVSRLQVQTLDENCDDFGILEFKMNDTRQGIVHVVGPEQGATLPGMTVVCGDSHTSTHGAFGALAHGIGTSEVEHVLATQCLIAKKMKNMQVRVEGTLPFGVTAKDIVLAVIGKIGTAGGNGHALEFAGSAIRAASMEGRMTICNMAIEAGARVGMVAVDEKTIAYVKGRPFAPKGAHWDAAVALWSTLVSDPDAHFDTVVELRAEDIKPQVSWGTSPEMVLAIDQHVPDPAAEQDPTKRDSIERALKYMGLTANQPITAIRLDRVFIGSCTNSRIEDLRAAAAVAKGRKVASTIKQALVVPGSGLVKAQAEAEGLDKVFLDAGFEWREPGCSMCLAMNPDKLGSGEHCASTSNRNFEGRQGAGGRTHLVSPAMAAAAAVSGHFVDVRELGDSGVGIRDS.

The disordered stretch occupies residues 60–79 (ATPDHNVPTTRAERQGGLES). 3 residues coordinate [4Fe-4S] cluster: Cys353, Cys414, and Cys417.

Belongs to the aconitase/IPM isomerase family. LeuC type 1 subfamily. As to quaternary structure, heterodimer of LeuC and LeuD. Requires [4Fe-4S] cluster as cofactor.

It carries out the reaction (2R,3S)-3-isopropylmalate = (2S)-2-isopropylmalate. It participates in amino-acid biosynthesis; L-leucine biosynthesis; L-leucine from 3-methyl-2-oxobutanoate: step 2/4. Functionally, catalyzes the isomerization between 2-isopropylmalate and 3-isopropylmalate, via the formation of 2-isopropylmaleate. The polypeptide is 3-isopropylmalate dehydratase large subunit (Xanthomonas euvesicatoria pv. vesicatoria (strain 85-10) (Xanthomonas campestris pv. vesicatoria)).